The sequence spans 96 residues: Glutamyl-tRNA(Gln) amidotransferase subunit C (96 aa).

This sequence belongs to the GatC family. In terms of assembly, heterotrimer of A, B and C subunits.

The catalysed reaction is L-glutamyl-tRNA(Gln) + L-glutamine + ATP + H2O = L-glutaminyl-tRNA(Gln) + L-glutamate + ADP + phosphate + H(+). It carries out the reaction L-aspartyl-tRNA(Asn) + L-glutamine + ATP + H2O = L-asparaginyl-tRNA(Asn) + L-glutamate + ADP + phosphate + 2 H(+). Functionally, allows the formation of correctly charged Asn-tRNA(Asn) or Gln-tRNA(Gln) through the transamidation of misacylated Asp-tRNA(Asn) or Glu-tRNA(Gln) in organisms which lack either or both of asparaginyl-tRNA or glutaminyl-tRNA synthetases. The reaction takes place in the presence of glutamine and ATP through an activated phospho-Asp-tRNA(Asn) or phospho-Glu-tRNA(Gln). The chain is Glutamyl-tRNA(Gln) amidotransferase subunit C from Neisseria meningitidis serogroup A / serotype 4A (strain DSM 15465 / Z2491).